A 564-amino-acid polypeptide reads, in one-letter code: MARAMGPERRLLAIYTGGTIGMRSEGGVLVPGRGLAAVLKTLHMFHDEEYAQAHSLPEDTLVLPPASPDQRIIYTVLECQPLFDSSDMTITEWVQIAQTIERHYAQYQGFVVIHGTDTMAFAASVLSFMLENLQKPVVLTGAQVPIHALWSDGRENLLGALLMAGQYVIPEVCLFFQNQLFRGNRTTKVDARRFAAFCSPNLPPLATVGADVTINRELVRKACGKSHLVVHSSMEPDVGLLRLYPGIPASLVRTFLQPPLKGVVMETFGSGNGPTKPDLLQELRVAAEQGLIIVNCTHCLQGAVTSDYASGMAMAGAGIVSGFDMTSEAALAKLSYVLGQPGLSLNDRKKLLAKDLRGEMTLPATDVLLQDGMLGCRVAWLLSMNGSQEADTMKDVLLPGLALAAAHAGDLDTLQAFVELDRDLNLKDYSGQTPLHVAARRGHAAVVTMLLQRGADVDARNEDGQSPLLLAVRGRHQSVIGLLRAAGARLSPQELEDVGTELCRLASRGDSEGLRAWWQAGADLGQPDYDGHCALQVAEAAGNADVVALLQSFKDSVCAQPQPH.

One can recognise an Asparaginase/glutaminase domain in the interval 9 to 355 (RRLLAIYTGG…NDRKKLLAKD (347 aa)). Thr19 (acyl-ester intermediate) is an active-site residue. An asparaginase region spans residues 41 to 350 (TLHMFHDEEY…PGLSLNDRKK (310 aa)). Residues 84–86 (DSS) and 116–117 (TD) each bind substrate. 5 ANK repeats span residues 141 to 170 (GAQV…YVIP), 396 to 426 (VLLP…DLNL), 430 to 459 (SGQT…DVDA), 463 to 492 (DGQS…RLSP), and 530 to 559 (DGHC…SVCA). At Ser478 the chain carries Phosphoserine.

In the N-terminal section; belongs to the asparaginase 1 family. Monomer.

It catalyses the reaction a 1-acyl-sn-glycero-3-phosphocholine + H2O = sn-glycerol 3-phosphocholine + a fatty acid + H(+). The enzyme catalyses L-asparagine + H2O = L-aspartate + NH4(+). The catalysed reaction is a 1-O-alkyl-2-acetyl-sn-glycero-3-phosphocholine + H2O = a 1-O-alkyl-sn-glycero-3-phosphocholine + acetate + H(+). It carries out the reaction 1-hexadecanoyl-sn-glycero-3-phosphocholine + H2O = sn-glycerol 3-phosphocholine + hexadecanoate + H(+). It catalyses the reaction 2 1-hexadecanoyl-sn-glycero-3-phosphocholine = 1,2-dihexadecanoyl-sn-glycero-3-phosphocholine + sn-glycerol 3-phosphocholine. The enzyme catalyses 1-octadecanoyl-sn-glycero-3-phosphocholine + H2O = octadecanoate + sn-glycerol 3-phosphocholine + H(+). The catalysed reaction is 1-(9Z-octadecenoyl)-sn-glycero-3-phosphocholine + H2O = sn-glycerol 3-phosphocholine + (9Z)-octadecenoate + H(+). It carries out the reaction 1-hexadecanoyl-sn-glycero-3-phosphoethanolamine + H2O = sn-glycero-3-phosphoethanolamine + hexadecanoate + H(+). It catalyses the reaction 1-(9Z-octadecenoyl)-sn-glycero-3-phosphoethanolamine + H2O = sn-glycero-3-phosphoethanolamine + (9Z)-octadecenoate + H(+). The enzyme catalyses 1-hexadecanoyl-sn-glycero-3-phosphoethanolamine + 1-hexadecanoyl-sn-glycero-3-phosphocholine = 1,2-dihexadecanoyl-sn-glycero-3-phosphoethanolamine + sn-glycerol 3-phosphocholine. The catalysed reaction is 2-(5Z,8Z,11Z,14Z)-eicosatetraenoyl-sn-glycero-3-phosphocholine + H2O = sn-glycerol 3-phosphocholine + (5Z,8Z,11Z,14Z)-eicosatetraenoate + H(+). It carries out the reaction 2-hexadecanoyl-sn-glycero-3-phosphocholine + H2O = sn-glycerol 3-phosphocholine + hexadecanoate + H(+). It catalyses the reaction 2 2-hexadecanoyl-sn-glycero-3-phosphocholine = 1,2-dihexadecanoyl-sn-glycero-3-phosphocholine + sn-glycerol 3-phosphocholine. The enzyme catalyses 1-O-(9Z)-octadecenoyl-2-O-acetyl-sn-glycero-3-phosphocholine + H2O = 2-acetyl-sn-glycero-3-phosphocholine + (9Z)-octadecenoate + H(+). The catalysed reaction is a 1-acyl-sn-glycero-3-phospho-(1D-myo-inositol) + 1-hexadecanoyl-sn-glycero-3-phosphocholine = a 1-acyl-2-hexadecanoyl-sn-glycero-3-phospho-(1D-myo-inositol) + sn-glycerol 3-phosphocholine. It carries out the reaction 2 2-(5Z,8Z,11Z,14Z)-eicosatetraenoyl-sn-glycero-3-phosphocholine = 1,2-di-(5Z,8Z,11Z,14Z-eicosatetraenoyl)-sn-glycero-3-phosphocholine + sn-glycerol 3-phosphocholine. In terms of biological role, exhibits lysophospholipase, transacylase, PAF acetylhydrolase and asparaginase activities. Can catalyze three types of transacylation reactions: (1) acyl transfer from 1-acyl-sn-glycero-3-phosphocholine (1-acyl-GPC) to the sn-1(3) positions of glycerol and 2-acylglycerol (sn-1 to -1(3) transfer), (2) acyl transfer from 1-acyl-GPC to the sn-2 positions of 1-acyl-GPC, 1-acyl-sn-glycero-3-phosphoethanolamine (1-acyl-GPE), and other lysophospholipids (sn-1 to -2 transfer) and (3) acyl transfer from 2-acyl-GPC to the sn-1 position of 2-acyl-GPC and 2-acyl-GPE (sn-2 to -1 transfer). Mediates the synthesis of 1-arachidonoyl species of phospholipids by transferring the arachidonoyl residue from 2-arachidonoyl lysophospholipid to the sn-1 position of 2-acyl lysophospholipid. The sequence is that of 60 kDa lysophospholipase (Aspg) from Mus musculus (Mouse).